Here is a 235-residue protein sequence, read N- to C-terminus: Large ribosomal subunit protein bL25 (235 aa).

Residues 201-235 (PVAEAKGKGKAAKPAATAKPAAAAAKPAAKPKAKK) are disordered. Residues 212-228 (AKPAATAKPAAAAAKPA) show a composition bias toward low complexity.

This sequence belongs to the bacterial ribosomal protein bL25 family. CTC subfamily. As to quaternary structure, part of the 50S ribosomal subunit; part of the 5S rRNA/L5/L18/L25 subcomplex. Contacts the 5S rRNA. Binds to the 5S rRNA independently of L5 and L18.

In terms of biological role, this is one of the proteins that binds to the 5S RNA in the ribosome where it forms part of the central protuberance. This chain is Large ribosomal subunit protein bL25, found in Verminephrobacter eiseniae (strain EF01-2).